The following is a 250-amino-acid chain: UPF0309 protein BH0227 (250 aa).

Residues 31-214 form the SIS domain; the sequence is VAESIQNGGI…KRMADNGYEP (184 aa).

Belongs to the UPF0309 family.

This chain is UPF0309 protein BH0227, found in Halalkalibacterium halodurans (strain ATCC BAA-125 / DSM 18197 / FERM 7344 / JCM 9153 / C-125) (Bacillus halodurans).